The following is an 861-amino-acid chain: Probable beta-glucosidase A (861 aa).

An N-terminal signal peptide occupies residues 1 to 19; it reads MKLGWIEVAALAAASVVSA. 3 N-linked (GlcNAc...) asparagine glycosylation sites follow: Asn62, Asn212, and Asn253. Asp281 is an active-site residue. N-linked (GlcNAc...) asparagine glycosylation is found at Asn316, Asn323, Asn355, Asn443, Asn524, Asn543, Asn565, Asn669, and Asn713. The tract at residues 730–754 is disordered; the sequence is DSKYIPEGATDGSAQPRLPASGGAG. N-linked (GlcNAc...) asparagine glycosylation is present at Asn846.

The protein belongs to the glycosyl hydrolase 3 family.

It is found in the secreted. The enzyme catalyses Hydrolysis of terminal, non-reducing beta-D-glucosyl residues with release of beta-D-glucose.. The protein operates within glycan metabolism; cellulose degradation. Beta-glucosidases are one of a number of cellulolytic enzymes involved in the degradation of cellulosic biomass. Catalyzes the last step releasing glucose from the inhibitory cellobiose. The protein is Probable beta-glucosidase A (bglA) of Aspergillus oryzae (strain ATCC 42149 / RIB 40) (Yellow koji mold).